The following is a 508-amino-acid chain: ATP synthase subunit alpha (508 aa).

169–176 provides a ligand contact to ATP; the sequence is GDRGTGKS.

It belongs to the ATPase alpha/beta chains family. In terms of assembly, F-type ATPases have 2 components, CF(1) - the catalytic core - and CF(0) - the membrane proton channel. CF(1) has five subunits: alpha(3), beta(3), gamma(1), delta(1), epsilon(1). CF(0) has three main subunits: a(1), b(2) and c(9-12). The alpha and beta chains form an alternating ring which encloses part of the gamma chain. CF(1) is attached to CF(0) by a central stalk formed by the gamma and epsilon chains, while a peripheral stalk is formed by the delta and b chains.

The protein localises to the cell membrane. It carries out the reaction ATP + H2O + 4 H(+)(in) = ADP + phosphate + 5 H(+)(out). Functionally, produces ATP from ADP in the presence of a proton gradient across the membrane. The alpha chain is a regulatory subunit. The sequence is that of ATP synthase subunit alpha from Natranaerobius thermophilus (strain ATCC BAA-1301 / DSM 18059 / JW/NM-WN-LF).